The primary structure comprises 87 residues: Keratin-associated protein 19-1 (87 aa).

Residues 6–72 (GYSGGLGYGY…SSYGGYGCGC (67 aa)) are 21 X 2 AA repeats of G-[YCGS].

The protein belongs to the KRTAP type 19 family. As to quaternary structure, interacts with hair keratins. In terms of tissue distribution, strong expression in narrowly defined pattern restricted to the lower and middle cortical regions of the hair shaft in both developing and cycling hair. During hair follicle regression (catagen), expression levels decrease until expression is no longer detectable in follicles at resting stage (telogen).

In terms of biological role, in the hair cortex, hair keratin intermediate filaments are embedded in an interfilamentous matrix, consisting of hair keratin-associated proteins (KRTAP), which are essential for the formation of a rigid and resistant hair shaft through their extensive disulfide bond cross-linking with abundant cysteine residues of hair keratins. The matrix proteins include the high-sulfur and high-glycine-tyrosine keratins. In Mus musculus (Mouse), this protein is Keratin-associated protein 19-1 (Krtap19-1).